The sequence spans 371 residues: Barbiturase 1 (371 aa).

Residues 1–103 are RU A; that stretch reads MPDAIEVRKV…TIFATVPPED (103 aa). Substrate is bound by residues Arg-53 and 82–83; that span reads SG. Residues 115–250 form an RU B region; sequence RLTVGFAMSE…AQVVVVGNAP (136 aa). Lys-165 is an active-site residue. Substrate contacts are provided by residues Asn-197 and 233–234; that span reads SS. The Nucleophile role is filled by Ser-233. The interval 256–371 is RU C; it reads YRIGHSVMKD…GPVAAIVDLG (116 aa). A Mg(2+)-binding site is contributed by Glu-304. Substrate contacts are provided by residues Lys-331 and 350-351; that span reads SV. Positions 353, 356, 357, 358, and 361 each coordinate Mg(2+).

It belongs to the cyclic amide hydrolase (CyAH) family. As to quaternary structure, homotetramer.

The catalysed reaction is barbiturate + H2O = 3-oxo-3-ureidopropanoate. It functions in the pathway pyrimidine metabolism; uracil degradation via oxidative pathway; malonate and urea from uracil: step 2/3. With respect to regulation, inhibited by cyanuric acid. Its function is as follows. Responsible for the hydrolysis of barbituric acid (2,4,6-trihydroxy-1,3-pyrimidine), an intermediate in the oxidative catabolism of pyrimidines. Catalyzes the hydrolytic opening of the pyrimidine ring of barbituric acid to yield ureidomalonic acid. The chain is Barbiturase 1 from Nocardioides sp. (strain ATCC BAA-499 / JS614).